Consider the following 349-residue polypeptide: 5-deoxyribose 1-phosphate isomerase (349 aa).

Residues 49 to 51, arginine 92, and glutamine 199 contribute to the substrate site; that span reads RGA. Aspartate 240 functions as the Proton donor in the catalytic mechanism. 250-251 lines the substrate pocket; the sequence is NK.

The protein belongs to the EIF-2B alpha/beta/delta subunits family. DrdI subfamily.

The catalysed reaction is 5-deoxy-alpha-D-ribose 1-phosphate = 5-deoxy-D-ribulose 1-phosphate. The protein operates within carbohydrate degradation. Catalyzes the isomerization of 5-deoxy-alpha-D-ribose 1-phosphate to 5-deoxy-D-ribulose 1-phosphate, as part of a 5-deoxyribose salvage pathway that recycles this toxic radical SAM enzyme by-product to mainstream metabolites. This chain is 5-deoxyribose 1-phosphate isomerase, found in Clostridium botulinum (strain Loch Maree / Type A3).